Here is a 1160-residue protein sequence, read N- to C-terminus: AF4/FMR2 family member 4 (1160 aa).

The segment covering 1-19 has biased composition (basic and acidic residues); that stretch reads MNREDRNVLRMKERERRNQ. Disordered regions lie at residues 1–42, 78–289, 322–908, and 1031–1070; these read MNRE…YKVT, PKPA…SKAH, WPPP…FDDR, and NSYSNSQAPSPGLGSKAVGMPSPVSPKLSPGNSGSYSSGG. Polar residues predominate over residues 115-128; that stretch reads PSTSQSQKRSSALQ. Phosphoserine is present on Ser120. Residues 172 to 189 are compositionally biased toward low complexity; the sequence is RSSSPGKPQAVSSLSSSH. The span at 193–212 shows a compositional bias: basic and acidic residues; sequence HGNDHHSKEHQRSKSPRDPD. The residue at position 207 (Ser207) is a Phosphoserine. The segment covering 229 to 247 has biased composition (low complexity); the sequence is SSQSFPPSLMSKSSSMLQK. Polar residues-rich tracts occupy residues 268-280 and 360-370; these read EHYSSQSHGNSMT and YSTAKTSNGHQ. Phosphoserine occurs at positions 382, 383, 384, and 387. The segment covering 398 to 407 has biased composition (polar residues); it reads PRSTPGSNSE. Residues 408–424 are compositionally biased toward basic and acidic residues; it reads PSHHNSEGADNSRDDSS. Residues 425–457 show a composition bias toward low complexity; that stretch reads SHSGSESSSGSDSESESSSSDSEANEPSQSASP. 3 positions are modified to phosphoserine: Ser482, Ser485, and Ser486. 3 stretches are compositionally biased toward polar residues: residues 483–496, 505–523, and 544–555; these read PASSVDSNIPSSQA, GTASNYTDPGGTKETSSAT, and SPAQSDSTTQRR. At Ser544 the chain carries Phosphoserine. A compositionally biased stretch (basic and acidic residues) spans 563-581; sequence KKPEKSAAEEPRGGLKIES. A Glycyl lysine isopeptide (Lys-Gly) (interchain with G-Cter in SUMO2) cross-link involves residue Lys578. A compositionally biased stretch (basic residues) spans 594–607; it reads SRHKAATKGSRKPN. Basic and acidic residues predominate over residues 608 to 622; sequence IKKESKSSPRPTAEK. Residues 641-657 are compositionally biased toward low complexity; the sequence is TDTSSSDSDGSESLPPS. Ser666 carries the post-translational modification Phosphoserine. Position 669 is a phosphothreonine (Thr669). A phosphoserine mark is found at Ser675, Ser689, Ser698, and Ser701. Tyr707 carries the phosphotyrosine modification. Composition is skewed to basic and acidic residues over residues 725-756, 764-784, and 794-806; these read PYKETEPPKGEKKNVPEKHSREVQKQASEKAS, KNDDDTRASESKKPKTEDKNS, and ESSKQSSTKEKDL. The residue at position 809 (Ser809) is a Phosphoserine. Position 817 is an N6-acetyllysine (Lys817). Ser831 is subject to Phosphoserine. Low complexity-rich tracts occupy residues 831–859 and 880–895; these read SQSSSLKSSGTSSKENSGSSSKSSSSSTA and PNSSSNCPPSTPTSES. Phosphoserine occurs at positions 1040, 1052, 1055, and 1059. The segment covering 1059-1070 has biased composition (low complexity); that stretch reads SPGNSGSYSSGG.

Belongs to the AF4 family. Component of the super elongation complex (SEC), at least composed of EAF1, EAF2, CDK9, MLLT3/AF9, AFF (AFF1 or AFF4), the P-TEFb complex and ELL (ELL, ELL2 or ELL3). Interacts with ELL2; the interaction is direct and leads to stabilize ELL2 and prevent ELL2 ubiquitination and degradation. Interacts with ELL3; the interaction is direct. Dephosphorylated at Ser-544 by the PNUTS-PP1 complex, promoting RNA polymerase II transcription pause-release. Highly expressed in testis by Sertoli cells, and at low levels in other tissues.

It localises to the nucleus. The protein localises to the chromosome. Key component of the super elongation complex (SEC), a complex required to increase the catalytic rate of RNA polymerase II transcription by suppressing transient pausing by the polymerase at multiple sites along the DNA. In the SEC complex, AFF4 acts as a central scaffold that recruits other factors through direct interactions with ELL proteins (ELL, ELL2 or ELL3) and the P-TEFb complex. This Mus musculus (Mouse) protein is AF4/FMR2 family member 4 (Aff4).